Consider the following 653-residue polypeptide: Modification methylase StsI (653 aa).

The protein belongs to the N(4)/N(6)-methyltransferase family. As to quaternary structure, monomer.

The enzyme catalyses a 2'-deoxyadenosine in DNA + S-adenosyl-L-methionine = an N(6)-methyl-2'-deoxyadenosine in DNA + S-adenosyl-L-homocysteine + H(+). In terms of biological role, an alpha subtype methylase that recognizes the double-stranded sequence 5'-GGATG-3' in one strand and 3'-CATCC-5' in the other, methylates A of both strands, and protects the DNA from cleavage by the StsI endonuclease. The 2 domains of the protein participate in modification of the two strands. The sequence is that of Modification methylase StsI (stsIM) from Streptococcus sanguinis.